The sequence spans 410 residues: Neuroserpin (410 aa).

A signal peptide spans 1 to 16 (MTYLELLALLALQSVV). N-linked (GlcNAc...) asparagine glycans are attached at residues Asn157, Asn321, and Asn401. The O-linked (Xyl...) (chondroitin sulfate) serine glycan is linked to Ser403.

Belongs to the serpin family. In terms of tissue distribution, detected in neurons in embryonic brain cortex (at protein level). During embryonic development mostly expressed in CNS. In adult expressed in brain and much less in spinal cord, heart, kidney and testis.

The protein localises to the secreted. It is found in the cytoplasmic vesicle. It localises to the secretory vesicle lumen. The protein resides in the perikaryon. Its function is as follows. Serine protease inhibitor that inhibits plasminogen activators and plasmin but not thrombin. May be involved in the formation or reorganization of synaptic connections as well as for synaptic plasticity in the adult nervous system. May protect neurons from cell damage by tissue-type plasminogen activator. The protein is Neuroserpin (Serpini1) of Mus musculus (Mouse).